A 107-amino-acid polypeptide reads, in one-letter code: Large ribosomal subunit protein uL24 (107 aa).

Belongs to the universal ribosomal protein uL24 family. In terms of assembly, part of the 50S ribosomal subunit.

Functionally, one of two assembly initiator proteins, it binds directly to the 5'-end of the 23S rRNA, where it nucleates assembly of the 50S subunit. One of the proteins that surrounds the polypeptide exit tunnel on the outside of the subunit. This Coxiella burnetii (strain Dugway 5J108-111) protein is Large ribosomal subunit protein uL24.